A 590-amino-acid chain; its full sequence is Aspartate--tRNA(Asp/Asn) ligase (590 aa).

Glu-175 lines the L-aspartate pocket. Residues 199–202 (QQFK) form an aspartate region. Positions 221 and 452 each coordinate L-aspartate. 221-223 (RDE) serves as a coordination point for ATP. Glu-485 contributes to the ATP binding site. Position 492 (Arg-492) interacts with L-aspartate. 537–540 (GIDR) provides a ligand contact to ATP.

It belongs to the class-II aminoacyl-tRNA synthetase family. Type 1 subfamily. Homodimer.

The protein localises to the cytoplasm. It carries out the reaction tRNA(Asx) + L-aspartate + ATP = L-aspartyl-tRNA(Asx) + AMP + diphosphate. In terms of biological role, aspartyl-tRNA synthetase with relaxed tRNA specificity since it is able to aspartylate not only its cognate tRNA(Asp) but also tRNA(Asn). Reaction proceeds in two steps: L-aspartate is first activated by ATP to form Asp-AMP and then transferred to the acceptor end of tRNA(Asp/Asn). This chain is Aspartate--tRNA(Asp/Asn) ligase, found in Dinoroseobacter shibae (strain DSM 16493 / NCIMB 14021 / DFL 12).